A 635-amino-acid polypeptide reads, in one-letter code: DNA primase (635 aa).

The CHC2-type zinc finger occupies 41 to 65 (CPFHDEKSPSFSVSPAKQMYYCFGC). One can recognise a Toprim domain in the interval 265-348 (DEAILVEGYF…SGQVNLRILN (84 aa)). Mg(2+) contacts are provided by Glu271, Asp317, and Asp319.

The protein belongs to the DnaG primase family. Monomer. Interacts with DnaB. The cofactor is Zn(2+). Mg(2+) is required as a cofactor.

It carries out the reaction ssDNA + n NTP = ssDNA/pppN(pN)n-1 hybrid + (n-1) diphosphate.. Its function is as follows. RNA polymerase that catalyzes the synthesis of short RNA molecules used as primers for DNA polymerase during DNA replication. In Synechocystis sp. (strain ATCC 27184 / PCC 6803 / Kazusa), this protein is DNA primase.